The primary structure comprises 386 residues: uncharacterized protein (386 aa).

The F-box domain maps to 29 to 76 (KYWKFLNEDCKIEVLKYLDYCSRCQLSICSKSDHKLVSITPLYVYEIE).

This is an uncharacterized protein from Caenorhabditis elegans.